The sequence spans 336 residues: Dual specificity mitogen-activated protein kinase kinase sek-1 (336 aa).

The Protein kinase domain maps to 50 to 311 (LVVLEELGKG…YPELLAMPFM (262 aa)). ATP is bound by residues 56-64 (LGKGGYGIV) and lysine 79. The Proton acceptor role is filled by aspartate 176. Serine 204 carries the phosphoserine modification. The residue at position 208 (threonine 208) is a Phosphothreonine.

This sequence belongs to the protein kinase superfamily. STE Ser/Thr protein kinase family. MAP kinase kinase subfamily. In terms of assembly, interacts with nsy-1. Interacts with unc-16. Requires Mg(2+) as cofactor. Expressed in linker cell in males.

It carries out the reaction L-seryl-[protein] + ATP = O-phospho-L-seryl-[protein] + ADP + H(+). The enzyme catalyses L-threonyl-[protein] + ATP = O-phospho-L-threonyl-[protein] + ADP + H(+). It catalyses the reaction L-tyrosyl-[protein] + ATP = O-phospho-L-tyrosyl-[protein] + ADP + H(+). Its activity is regulated as follows. Activated by nsy-1-mediated phosphorylation. Dual specificity protein kinase which acts as an essential component of the p38 signal transduction pathway which is also composed of upstream effector nsy-1 and downstream effector pmk-1. May phosphorylate pmk-1. Downstream of CaMKII unc-43 and adapter protein tir-1, plays a role in determining asymmetric cell fates in olfactory AWC neurons during neuronal development. Activation results in the repression of odorant receptor str-2 expression in one of the 2 AWC neurons. Involved in resistance to pathogenic Gram-positive and Gram-negative bacterial and fungal infection. Involved in resistance to the nematotoxic C.cinerea galectin Cgl2. Probably by promoting pmk-1-mediated activation of skn-1, involved in the up-regulation of gcs-1 and glutathione-S-transferase gst-4 expression upon bacterial infection. Probably downstream of tir-1, required for the expression of antimicrobial peptide nlp-29 in the epidermis in response to fungal infection or physical injury. Regulates susceptibility of B.thuringiensis pore-forming toxin Cry5B and Cry21A. Involved in the response to oxidative stress. May regulate transcription factor daf-16 localization during oxidative stress. By phosphorylating pmk-1, regulates skn-1 localization during oxidative stress. By phosphorylating and activating pmk-1, plays a role in the stabilization of transcription factor rnt-1 in the intestine during oxidative stress. Up-regulates expression of gcs-1 in intestine upon arsenite treatment. Regulates germline proliferation in response to osmotic stress, starvation and germline apoptosis induced by heavy metals, such as Cu(2+). In association with mek-1, regulates germline cell apoptosis in response to oxidative, osmotic and heat shock stresses. Plays a role downstream of tir-1/nsy-1 in regulating susceptibility to anoxia. In males, by regulating pqn-41 expression, involved in non-apoptotic death of the linker cell which guides gonad elongation during larval development. Involved in egg laying. The polypeptide is Dual specificity mitogen-activated protein kinase kinase sek-1 (Caenorhabditis elegans).